The primary structure comprises 414 residues: NAD-specific glutamate dehydrogenase (414 aa).

Substrate is bound by residues Lys70 and Lys94. Residue Lys106 is the Proton donor of the active site. Residues Thr190 and Asn221 each coordinate NAD(+). Ser348 lines the substrate pocket.

The protein belongs to the Glu/Leu/Phe/Val dehydrogenases family. In terms of assembly, homohexamer.

It catalyses the reaction L-glutamate + NAD(+) + H2O = 2-oxoglutarate + NH4(+) + NADH + H(+). The chain is NAD-specific glutamate dehydrogenase (gluD) from Staphylococcus aureus (strain COL).